The following is a 182-amino-acid chain: Putative manganese efflux pump MntP (182 aa).

6 consecutive transmembrane segments (helical) span residues 6–26 (LIPL…VSLG), 37–57 (ILYI…IGMV), 71–91 (HFAG…SSIL), 101–121 (IGIS…SVGL), 131–151 (VITI…GLFI), and 162–182 (YGEI…LFPI).

This sequence belongs to the MntP (TC 9.B.29) family.

It is found in the cell membrane. Its function is as follows. Probably functions as a manganese efflux pump. This is Putative manganese efflux pump MntP from Bacillus cereus (strain AH187).